The sequence spans 462 residues: Argininosuccinate lyase (462 aa).

Belongs to the lyase 1 family. Argininosuccinate lyase subfamily.

The protein resides in the cytoplasm. It catalyses the reaction 2-(N(omega)-L-arginino)succinate = fumarate + L-arginine. The protein operates within amino-acid biosynthesis; L-arginine biosynthesis; L-arginine from L-ornithine and carbamoyl phosphate: step 3/3. In Hydrogenovibrio crunogenus (strain DSM 25203 / XCL-2) (Thiomicrospira crunogena), this protein is Argininosuccinate lyase.